Reading from the N-terminus, the 343-residue chain is MSDRQAALDMALKQIEKQFGKGSIMKLGEQAERRVSTVSSGSLALDVALGVGGYPRGRIIEIYGPESSGKTTVSLHAIAEVQRQGGQAAFIDAEHAMDPVYAQKLGVNIDELLLSQPDTGEQGLEIAEALVRSGAVDIIVIDSVAALVPKAEIEGDMGDSHVGLQARLMSQALRKLSGAINKSKTIAIFINQIREKVGVMFGNPETTPGGRALKFYSTVRLEVRRAEQLKQGNDIVGNKTKVKVVKNKVAPPFRVAEVDIMYGEGISREGEILDMASELDIVQKSGAWYSYNEERLGQGRENSKQFLKENTDLREEIAFFIREHHGISEDSGAEGVEDPTLLD.

64–71 is a binding site for ATP; that stretch reads GPESSGKT.

This sequence belongs to the RecA family.

The protein resides in the cytoplasm. Its function is as follows. Can catalyze the hydrolysis of ATP in the presence of single-stranded DNA, the ATP-dependent uptake of single-stranded DNA by duplex DNA, and the ATP-dependent hybridization of homologous single-stranded DNAs. It interacts with LexA causing its activation and leading to its autocatalytic cleavage. The polypeptide is Protein RecA (Bacillus cereus (strain B4264)).